Here is a 355-residue protein sequence, read N- to C-terminus: Peptide chain release factor 1 (355 aa).

An N5-methylglutamine modification is found at Gln233.

The protein belongs to the prokaryotic/mitochondrial release factor family. Methylated by PrmC. Methylation increases the termination efficiency of RF1.

It is found in the cytoplasm. Peptide chain release factor 1 directs the termination of translation in response to the peptide chain termination codons UAG and UAA. The sequence is that of Peptide chain release factor 1 from Dehalococcoides mccartyi (strain ATCC BAA-2100 / JCM 16839 / KCTC 5957 / BAV1).